Consider the following 198-residue polypeptide: Putative Do-like 15 protein (198 aa).

A serine protease region spans residues 48–198; sequence KIFSFSREPN…VFENDSPSDK (151 aa). Catalysis depends on charge relay system residues His86 and Ser175.

This sequence belongs to the peptidase S1B family.

The polypeptide is Putative Do-like 15 protein (DEGP15) (Arabidopsis thaliana (Mouse-ear cress)).